We begin with the raw amino-acid sequence, 132 residues long: UPF0102 protein Ajs_0414 (132 aa).

Residues 1–23 (MGFLGKKVNGSAPARTTRAAGQA) form a disordered region.

This sequence belongs to the UPF0102 family.

This Acidovorax sp. (strain JS42) protein is UPF0102 protein Ajs_0414.